A 54-amino-acid polypeptide reads, in one-letter code: Rubredoxin (54 aa).

One can recognise a Rubredoxin-like domain in the interval 1–54; that stretch reads MKKYVCVVCGYIYDPAEGDPDNGVNPGTSFEDIPDDWVCPLCGVGKDQFEPSEE. Cys6, Cys9, Cys39, and Cys42 together coordinate Fe cation.

This sequence belongs to the rubredoxin family. Fe(3+) serves as cofactor.

Its function is as follows. Rubredoxin is a small nonheme, iron protein lacking acid-labile sulfide. Its single Fe, chelated to 4 Cys, functions as an electron acceptor and may also stabilize the conformation of the molecule. Functions as an intermediate component in the electron transfer chain: NADH-&gt;NROR-&gt;Rd-&gt;FprA1/2 in which Rd serves as the proximal electron donor to the FDPs that exhibit H(2)O-forming NADH oxidase activity. Also functions as the proximal electron donor to the Dfx and revRbr proteins that display superoxide reductase (SOR) and NADH peroxidase activity, respectively. Therefore, is a key electron carrier in an efficient multienzyme complex that can scavenge O(2) and reactive oxygen species (ROS), and thus plays an important role in the oxidative stress defense system in C.acetobutylicum, an obligate anaerobic bacterium. In Clostridium acetobutylicum (strain ATCC 824 / DSM 792 / JCM 1419 / IAM 19013 / LMG 5710 / NBRC 13948 / NRRL B-527 / VKM B-1787 / 2291 / W), this protein is Rubredoxin (rd).